The primary structure comprises 422 residues: Serine--tRNA ligase (422 aa).

229–231 (TAE) contacts L-serine. 258–260 (RRE) provides a ligand contact to ATP. Glutamate 281 is an L-serine binding site. 345 to 348 (EISS) is an ATP binding site. Serine 379 is an L-serine binding site.

The protein belongs to the class-II aminoacyl-tRNA synthetase family. Type-1 seryl-tRNA synthetase subfamily. Homodimer. The tRNA molecule binds across the dimer.

It is found in the cytoplasm. It carries out the reaction tRNA(Ser) + L-serine + ATP = L-seryl-tRNA(Ser) + AMP + diphosphate + H(+). The enzyme catalyses tRNA(Sec) + L-serine + ATP = L-seryl-tRNA(Sec) + AMP + diphosphate + H(+). It participates in aminoacyl-tRNA biosynthesis; selenocysteinyl-tRNA(Sec) biosynthesis; L-seryl-tRNA(Sec) from L-serine and tRNA(Sec): step 1/1. Functionally, catalyzes the attachment of serine to tRNA(Ser). Is also able to aminoacylate tRNA(Sec) with serine, to form the misacylated tRNA L-seryl-tRNA(Sec), which will be further converted into selenocysteinyl-tRNA(Sec). This Methanosarcina mazei (strain ATCC BAA-159 / DSM 3647 / Goe1 / Go1 / JCM 11833 / OCM 88) (Methanosarcina frisia) protein is Serine--tRNA ligase.